A 429-amino-acid chain; its full sequence is Violacein synthase (429 aa).

3–21 (RAIIVGGGLAGGLTAIYLA) is an FAD binding site.

It depends on FAD as a cofactor.

The enzyme catalyses protoviolaceinate + NADPH + O2 + H(+) = violaceinate + NADP(+) + H2O. It carries out the reaction protoviolaceinate + NADH + O2 + H(+) = violaceinate + NAD(+) + H2O. The catalysed reaction is protodeoxyviolaceinate + NADPH + O2 + H(+) = deoxyviolaceinate + NADP(+) + H2O. It catalyses the reaction protodeoxyviolaceinate + NADH + O2 + H(+) = deoxyviolaceinate + NAD(+) + H2O. Its pathway is pigment biosynthesis; violacein biosynthesis. In terms of biological role, catalyzes the hydroxylation of the 16-position of protoviolaceinate and protodeoxyviolaceinate to form violacein and deoxyviolacein, respectively. In Chromobacterium violaceum (strain ATCC 12472 / DSM 30191 / JCM 1249 / CCUG 213 / NBRC 12614 / NCIMB 9131 / NCTC 9757 / MK), this protein is Violacein synthase (vioC).